The primary structure comprises 754 residues: 5-methyltetrahydropteroyltriglutamate--homocysteine methyltransferase (754 aa).

5-methyltetrahydropteroyltri-L-glutamate-binding positions include 17-20 and K117; that span reads RELK. Residues 431-433 and E484 each bind L-homocysteine; that span reads IGS. Residues 431-433 and E484 each bind L-methionine; that span reads IGS. 5-methyltetrahydropteroyltri-L-glutamate is bound by residues 515–516 and W561; that span reads RC. D599 contributes to the L-homocysteine binding site. D599 contacts L-methionine. Residue E605 coordinates 5-methyltetrahydropteroyltri-L-glutamate. H641, C643, and E665 together coordinate Zn(2+). H694 serves as the catalytic Proton donor. C726 serves as a coordination point for Zn(2+).

Belongs to the vitamin-B12 independent methionine synthase family. Zn(2+) is required as a cofactor.

It catalyses the reaction 5-methyltetrahydropteroyltri-L-glutamate + L-homocysteine = tetrahydropteroyltri-L-glutamate + L-methionine. It participates in amino-acid biosynthesis; L-methionine biosynthesis via de novo pathway; L-methionine from L-homocysteine (MetE route): step 1/1. In terms of biological role, catalyzes the transfer of a methyl group from 5-methyltetrahydrofolate to homocysteine resulting in methionine formation. The chain is 5-methyltetrahydropteroyltriglutamate--homocysteine methyltransferase from Salmonella agona (strain SL483).